The following is a 334-amino-acid chain: B1 bradykinin receptor (334 aa).

Residues 1-21 are disordered; the sequence is MASQASLKLQPSNQSQQAPPN. Topologically, residues 1-41 are extracellular; the sequence is MASQASLKLQPSNQSQQAPPNITSCEGAPEAWDLLCRVLPG. The span at 10–21 shows a compositional bias: low complexity; sequence QPSNQSQQAPPN. N-linked (GlcNAc...) asparagine glycans are attached at residues Asn-13 and Asn-21. Residues 42 to 62 traverse the membrane as a helical segment; that stretch reads FVITVCFFGLLGNLLVLSFFL. Over 63–80 the chain is Cytoplasmic; it reads LPWRRWWQQRRQRLTIAE. Residues 81 to 101 traverse the membrane as a helical segment; that stretch reads IYLANLAASDLVFVLGLPFWA. The Extracellular portion of the chain corresponds to 102 to 118; the sequence is ENVGNRFNWPFGSDLCR. Cysteines 117 and 196 form a disulfide. A helical transmembrane segment spans residues 119–139; the sequence is VVSGVIKANLFISIFLVVAIS. The Cytoplasmic segment spans residues 140 to 161; the sequence is QDRYRLLVYPMTSWGNRRRRQA. A helical transmembrane segment spans residues 162–182; that stretch reads QVTCLLIWVAGGLLSTPTFLL. At 183-214 the chain is on the extracellular side; it reads RSVKVVPDLNISACILLFPHEAWHFVRMVELN. Asn-192 carries N-linked (GlcNAc...) asparagine glycosylation. The helical transmembrane segment at 215-235 threads the bilayer; it reads VLGFLLPLAAILYFNFHILAS. The Cytoplasmic segment spans residues 236-258; it reads LRGQKEASRTRCGGPKDSKTMGL. The helical transmembrane segment at 259 to 279 threads the bilayer; that stretch reads ILTLVASFLVCWAPYHFFAFL. The Extracellular portion of the chain corresponds to 280–302; the sequence is DFLVQVRVIQDCFWKELTDLGLQ. A helical transmembrane segment spans residues 303–323; that stretch reads LANFFAFVNSCLNPLIYVFAG. Residues 324-334 are Cytoplasmic-facing; it reads RLFKTRVLGTL.

This sequence belongs to the G-protein coupled receptor 1 family. Bradykinin receptor subfamily. BDKRB1 sub-subfamily. Expressed in heart, liver and lung.

It is found in the cell membrane. Functionally, this is a receptor for bradykinin. Could be a factor in chronic pain and inflammation. This is B1 bradykinin receptor (Bdkrb1) from Mus musculus (Mouse).